The chain runs to 540 residues: Probable LRR receptor-like serine/threonine-protein kinase RPK1 (540 aa).

A signal peptide spans 1 to 19; it reads MKLLGLVFLLFNLFMFSFS. At 20–198 the chain is on the extracellular side; sequence RKLLTESGGG…PGKSGLYPIE (179 aa). LRR repeat units lie at residues 118 to 142 and 144 to 169; these read LSEI…IWGL and KLEI…VLRK. Residues 199-219 form a helical membrane-spanning segment; sequence IASIVSASVIVFVLLVLVILF. At 220–540 the chain is on the cytoplasmic side; sequence IYTRKWKRNS…LLKRIQPSRL (321 aa). Phosphothreonine is present on residues threonine 250 and threonine 258. The 275-residue stretch at 261–535 folds into the Protein kinase domain; it reads FSNSNCIGHG…KQAVRLLKRI (275 aa). Residues 267 to 275 and lysine 289 each bind ATP; that span reads IGHGGFGST. Residues tyrosine 334 and tyrosine 372 each carry the phosphotyrosine modification. Aspartate 385 serves as the catalytic Proton acceptor. Tyrosine 427 carries the phosphotyrosine modification. Threonine 435 carries the post-translational modification Phosphothreonine.

Belongs to the protein kinase superfamily. Ser/Thr protein kinase family. Expressed in roots, stems, leaves, and flowers.

The protein resides in the cell membrane. The enzyme catalyses L-seryl-[protein] + ATP = O-phospho-L-seryl-[protein] + ADP + H(+). It catalyses the reaction L-threonyl-[protein] + ATP = O-phospho-L-threonyl-[protein] + ADP + H(+). Involved in the main abscisic acid-mediated (ABA) signaling pathway and in early ABA perception. Together with RPK2, required for pattern formation along the radial axis (e.g. the apical embryonic domain cell types that generate cotyledon primordia), and the apical-basal axis (e.g. differentiation of the basal pole during early embryogenesis). This chain is Probable LRR receptor-like serine/threonine-protein kinase RPK1 (RPK1), found in Arabidopsis thaliana (Mouse-ear cress).